A 577-amino-acid chain; its full sequence is Arginine--tRNA ligase (577 aa).

The short motif at 122-132 (PNVAKEMHVGH) is the 'HIGH' region element.

It belongs to the class-I aminoacyl-tRNA synthetase family. Monomer.

Its subcellular location is the cytoplasm. The enzyme catalyses tRNA(Arg) + L-arginine + ATP = L-arginyl-tRNA(Arg) + AMP + diphosphate. The chain is Arginine--tRNA ligase from Escherichia coli O81 (strain ED1a).